Here is a 164-residue protein sequence, read N- to C-terminus: MPLLDSFKVDHTKMKAPGVRLAKVMQTPKGDNISVFDLRFCRPNHEIMSEKGTHTLEHLFAGFMREHLNSKDVEIIDISPMGCRTGFYMSLIGRPSETEVIKAFENSMKDVLKVTSQDDIPELNKFQCGSYKMHSLSEAKEIAQNVLNKGICIIKNDEIKLENF.

Fe cation is bound by residues histidine 54, histidine 58, and cysteine 128.

The protein belongs to the LuxS family. As to quaternary structure, homodimer. Fe cation is required as a cofactor.

It catalyses the reaction S-(5-deoxy-D-ribos-5-yl)-L-homocysteine = (S)-4,5-dihydroxypentane-2,3-dione + L-homocysteine. Involved in the synthesis of autoinducer 2 (AI-2) which is secreted by bacteria and is used to communicate both the cell density and the metabolic potential of the environment. The regulation of gene expression in response to changes in cell density is called quorum sensing. Catalyzes the transformation of S-ribosylhomocysteine (RHC) to homocysteine (HC) and 4,5-dihydroxy-2,3-pentadione (DPD). This chain is S-ribosylhomocysteine lyase, found in Campylobacter hominis (strain ATCC BAA-381 / DSM 21671 / CCUG 45161 / LMG 19568 / NCTC 13146 / CH001A).